Here is a 147-residue protein sequence, read N- to C-terminus: Epididymal secretory protein E3-beta (147 aa).

The first 25 residues, 1–25 (MASSLKIWGTLLALLCILCTLLVQS), serve as a signal peptide directing secretion.

Epididymis.

It localises to the secreted. Possible function in sperm maturation. The sequence is that of Epididymal secretory protein E3-beta (EDDM3B) from Homo sapiens (Human).